The primary structure comprises 161 residues: MAEVANNEQQGPQFNIQRVYTKDISFETPNSPAVFQKEWNPEVKLDLDTRSNKLSDDVYEVVLSLTVTAKNGEETAFLCEVQQAGIFAIAGLTEQQLAHSLGAYCPNVLFPYAREAIGSLVSRGTFPQLNLAPVNFDALFAQYVQQRQAAAAEAPAEEANA.

It belongs to the SecB family. Homotetramer, a dimer of dimers. One homotetramer interacts with 1 SecA dimer.

It is found in the cytoplasm. One of the proteins required for the normal export of preproteins out of the cell cytoplasm. It is a molecular chaperone that binds to a subset of precursor proteins, maintaining them in a translocation-competent state. It also specifically binds to its receptor SecA. The sequence is that of Protein-export protein SecB from Shewanella pealeana (strain ATCC 700345 / ANG-SQ1).